A 348-amino-acid polypeptide reads, in one-letter code: Dihydroorotase (348 aa).

Zn(2+) contacts are provided by His-17 and His-19. Residues 19 to 21 (HLR) and Asn-45 each bind substrate. 3 residues coordinate Zn(2+): Lys-103, His-140, and His-178. Lys-103 carries the N6-carboxylysine modification. Residue His-140 coordinates substrate. Leu-223 provides a ligand contact to substrate. Residue Asp-251 coordinates Zn(2+). Asp-251 is an active-site residue. Residues His-255 and Ala-267 each coordinate substrate.

This sequence belongs to the metallo-dependent hydrolases superfamily. DHOase family. Class II DHOase subfamily. As to quaternary structure, homodimer. Requires Zn(2+) as cofactor.

The catalysed reaction is (S)-dihydroorotate + H2O = N-carbamoyl-L-aspartate + H(+). Its pathway is pyrimidine metabolism; UMP biosynthesis via de novo pathway; (S)-dihydroorotate from bicarbonate: step 3/3. Catalyzes the reversible cyclization of carbamoyl aspartate to dihydroorotate. This chain is Dihydroorotase, found in Edwardsiella ictaluri (strain 93-146).